The following is a 692-amino-acid chain: Polyribonucleotide nucleotidyltransferase (692 aa).

Aspartate 484 and aspartate 490 together coordinate Mg(2+). In terms of domain architecture, KH spans 551–614; the sequence is PKYFIHKISQ…ALVERVKSIT (64 aa). One can recognise an S1 motif domain in the interval 620–688; that stretch reads GAVYTGKVKT…NRGRIRLSRK (69 aa).

This sequence belongs to the polyribonucleotide nucleotidyltransferase family. It depends on Mg(2+) as a cofactor.

It is found in the cytoplasm. It catalyses the reaction RNA(n+1) + phosphate = RNA(n) + a ribonucleoside 5'-diphosphate. Involved in mRNA degradation. Catalyzes the phosphorolysis of single-stranded polyribonucleotides processively in the 3'- to 5'-direction. The protein is Polyribonucleotide nucleotidyltransferase of Desulfotalea psychrophila (strain LSv54 / DSM 12343).